The following is a 121-amino-acid chain: uncharacterized protein (121 aa).

The N-terminal stretch at 1 to 31 (MILNNKGFIRILEATIAGIMVILVFSYLVMS) is a signal peptide.

This sequence to B.burgdorferi BB0465 N-terminal region.

This is an uncharacterized protein from Methanocaldococcus jannaschii (strain ATCC 43067 / DSM 2661 / JAL-1 / JCM 10045 / NBRC 100440) (Methanococcus jannaschii).